Reading from the N-terminus, the 474-residue chain is GTPase Der (474 aa).

EngA-type G domains follow at residues 3–167 and 204–379; these read FTVA…GVDR and LRVA…MVWN. GTP is bound by residues 9–16, 56–60, 119–122, 210–217, 257–261, and 322–325; these read GRPNVGKS, DTAGL, NKSE, GRPNAGKS, DTAGM, and NKWD. The 85-residue stretch at 380–464 folds into the KH-like domain; it reads KRISTAKLNR…PIRIHLKASE (85 aa).

This sequence belongs to the TRAFAC class TrmE-Era-EngA-EngB-Septin-like GTPase superfamily. EngA (Der) GTPase family. In terms of assembly, associates with the 50S ribosomal subunit.

GTPase that plays an essential role in the late steps of ribosome biogenesis. This Allorhizobium ampelinum (strain ATCC BAA-846 / DSM 112012 / S4) (Agrobacterium vitis (strain S4)) protein is GTPase Der.